The sequence spans 280 residues: MPVRILKPRTPGTRFFSYPSFEEITTDKPEKSLLVPNKSTGGRNNNGRVTSRHMGGGHKRYYRIIDFKRNKDGIPAKVATIEYDPNRTARIALLSYADGEKRYILAPNGIKVGDLIECGPEADIKVGNALPLKNIPVGIEVHNIEMRPGKGGQMARSAGSYAVLVAKEGDYATLKMPSGELRKVRVECKATVGVIGNLEHENLSLGKAGRSRWLGIRPQTRGMAMNPVDHPMGGGEGKSKSGGGRKHPKSPWGQKSKGLKTRKRKKASSKLIVRRRDSKK.

Disordered regions lie at residues 32-54 and 221-280; these read SLLV…SRHM and RGMA…DSKK. Residues 37–49 show a composition bias toward polar residues; that stretch reads NKSTGGRNNNGRV. Gly residues predominate over residues 232–242; the sequence is MGGGEGKSKSG. Residues 257–280 show a composition bias toward basic residues; the sequence is KGLKTRKRKKASSKLIVRRRDSKK.

Belongs to the universal ribosomal protein uL2 family. In terms of assembly, part of the 50S ribosomal subunit. Forms a bridge to the 30S subunit in the 70S ribosome.

One of the primary rRNA binding proteins. Required for association of the 30S and 50S subunits to form the 70S ribosome, for tRNA binding and peptide bond formation. It has been suggested to have peptidyltransferase activity; this is somewhat controversial. Makes several contacts with the 16S rRNA in the 70S ribosome. In Chloroherpeton thalassium (strain ATCC 35110 / GB-78), this protein is Large ribosomal subunit protein uL2.